The chain runs to 236 residues: 7-cyano-7-deazaguanine synthase (236 aa).

Phe12–Leu22 contributes to the ATP binding site. Residues Cys200, Cys215, Cys218, and Cys221 each contribute to the Zn(2+) site.

This sequence belongs to the QueC family. It depends on Zn(2+) as a cofactor.

The catalysed reaction is 7-carboxy-7-deazaguanine + NH4(+) + ATP = 7-cyano-7-deazaguanine + ADP + phosphate + H2O + H(+). The protein operates within purine metabolism; 7-cyano-7-deazaguanine biosynthesis. Functionally, catalyzes the ATP-dependent conversion of 7-carboxy-7-deazaguanine (CDG) to 7-cyano-7-deazaguanine (preQ(0)). This Bradyrhizobium sp. (strain ORS 278) protein is 7-cyano-7-deazaguanine synthase.